A 234-amino-acid polypeptide reads, in one-letter code: Two-component response regulator ARR9 (234 aa).

The 138-residue stretch at 10–147 (HVLAVDDSLF…DLNKLKPHMM (138 aa)) folds into the Response regulatory domain. Asp80 carries the post-translational modification 4-aspartylphosphate.

The protein belongs to the ARR family. Type-A subfamily. Interacts with AHP1 and AHP3. Two-component system major event consists of a His-to-Asp phosphorelay between a sensor histidine kinase (HK) and a response regulator (RR). In plants, the His-to-Asp phosphorelay involves an additional intermediate named Histidine-containing phosphotransfer protein (HPt). This multistep phosphorelay consists of a His-Asp-His-Asp sequential transfer of a phosphate group between first a His and an Asp of the HK protein, followed by the transfer to a conserved His of the HPt protein and finally the transfer to an Asp in the receiver domain of the RR protein. In terms of tissue distribution, predominantly expressed in roots.

It is found in the nucleus. Functionally, functions as a response regulator involved in His-to-Asp phosphorelay signal transduction system. Phosphorylation of the Asp residue in the receiver domain activates the ability of the protein to promote the transcription of target genes. Type-A response regulators seem to act as negative regulators of the cytokinin signaling. This Arabidopsis thaliana (Mouse-ear cress) protein is Two-component response regulator ARR9 (ARR9).